The following is a 63-amino-acid chain: Large ribosomal subunit protein bL35 (63 aa).

It belongs to the bacterial ribosomal protein bL35 family.

This chain is Large ribosomal subunit protein bL35, found in Sulfurovum sp. (strain NBC37-1).